The sequence spans 584 residues: MTKEVCSNIGLWLLLTLLIGNYVVNLEASHHVYKRLTQSTNTKSPSVNQPYRTGFHFQPPKNWMNDPNGPMIYKGIYHLFYQWNPKGAVWGNIVWAHSTSTDLINWDPHPPAIFPSAPFDINGCWSGSATILPNGKPVILYTGIDPKNQQVQNIAEPKNLSDPYLREWKKSPLNPLMAPDAVNGINASSFRDPTTAWLGQDKKWRVIIGSKIHRRGLAITYTSKDFLKWEKSPEPLHYDDGSGMWECPDFFPVTRFGSNGVETSSFGEPNEILKHVLKISLDDTKHDYYTIGTYDRVKDKFVPDNGFKMDGTAPRYDYGKYYASKTFFDSAKNRRILWGWTNESSSVEDDVEKGWSGIQTIPRKIWLDRSGKQLIQWPVREVERLRTKQVKNLRNKVLKSGSRLEVYGVTAAQADVEVLFKVRDLEKADVIEPSWTDPQLICSKMNVSVKSGLGPFGLMVLASKNLEEYTSVYFRIFKARQNSNKYVVLMCSDQSRSSLKEDNDKTTYGAFVDINPHQPLSLRALIDHSVVESFGGKGRACITSRVYPKLAIGKSSHLFAFNYGYQSVDVLNLNAWSMNSAQIS.

The first 28 residues, 1–28 (MTKEVCSNIGLWLLLTLLIGNYVVNLEA), serve as a signal peptide directing secretion. Substrate-binding positions include 63-66 (WMND), Q82, W90, and 125-126 (WS). D66 is an active-site residue. N-linked (GlcNAc...) asparagine glycans are attached at residues N159 and N186. Substrate is bound by residues 191 to 192 (RD), E246, and D282. 2 N-linked (GlcNAc...) asparagine glycosylation sites follow: N342 and N446. C442 and C491 are oxidised to a cystine.

It belongs to the glycosyl hydrolase 32 family. In terms of tissue distribution, expressed in seedlings, leaves, flowers, and seeds.

The protein localises to the secreted. The protein resides in the extracellular space. It is found in the apoplast. It localises to the cell wall. The enzyme catalyses Hydrolysis of terminal non-reducing beta-D-fructofuranoside residues in beta-D-fructofuranosides.. In terms of biological role, beta-fructofuranosidase that can use sucrose and 1-kestose, and, to a lower extent, neokestose and levan, as substrates, but not inuline. This is Beta-fructofuranosidase, insoluble isoenzyme CWINV1 (CWINV1) from Arabidopsis thaliana (Mouse-ear cress).